Consider the following 151-residue polypeptide: Ribonuclease P protein component (151 aa).

The disordered stretch occupies residues 1 to 62 (MDEKDLATQP…LKGDSAFRRL (62 aa)). Positions 28–48 (GAQGAEAQAAEGPLAAHAQGA) are enriched in low complexity.

The protein belongs to the RnpA family. Consists of a catalytic RNA component (M1 or rnpB) and a protein subunit.

It carries out the reaction Endonucleolytic cleavage of RNA, removing 5'-extranucleotides from tRNA precursor.. In terms of biological role, RNaseP catalyzes the removal of the 5'-leader sequence from pre-tRNA to produce the mature 5'-terminus. It can also cleave other RNA substrates such as 4.5S RNA. The protein component plays an auxiliary but essential role in vivo by binding to the 5'-leader sequence and broadening the substrate specificity of the ribozyme. In Thermus oshimai, this protein is Ribonuclease P protein component.